Here is a 137-residue protein sequence, read N- to C-terminus: MKIALIAHDKKKQDMVQFTTAYRDILKNHDLYATGTTGLKIHEATGLQIERFQSGPLGGDQQIGALIAANALDLVIFLRDPLTAQPHEPDVSALIRLCDVYSIPLATNMGTAEILVRTLDEGVFEFRDLLRGEEPNV.

Residues 1–137 (MKIALIAHDK…DLLRGEEPNV (137 aa)) enclose the MGS-like domain. Residues H8, K12, 34-37 (TGTT), and 54-55 (SG) contribute to the substrate site. D60 functions as the Proton donor/acceptor in the catalytic mechanism. H87 serves as a coordination point for substrate.

It belongs to the methylglyoxal synthase family.

The catalysed reaction is dihydroxyacetone phosphate = methylglyoxal + phosphate. Catalyzes the formation of methylglyoxal from dihydroxyacetone phosphate. In Bacillus subtilis (strain 168), this protein is Methylglyoxal synthase.